We begin with the raw amino-acid sequence, 471 residues long: GTPase Der (471 aa).

EngA-type G domains lie at 3 to 168 and 178 to 353; these read PIVA…PDLS and VRVA…ANHA. Residues 9 to 16, 56 to 60, 120 to 123, 184 to 191, 231 to 235, and 296 to 299 each bind GTP; these read GRPNVGKS, DTGGI, NKVE, DTAGM, and NKWD. In terms of domain architecture, KH-like spans 354-438; that stretch reads RRISTRELND…PINLYFRTRE (85 aa).

This sequence belongs to the TRAFAC class TrmE-Era-EngA-EngB-Septin-like GTPase superfamily. EngA (Der) GTPase family. In terms of assembly, associates with the 50S ribosomal subunit.

GTPase that plays an essential role in the late steps of ribosome biogenesis. In Symbiobacterium thermophilum (strain DSM 24528 / JCM 14929 / IAM 14863 / T), this protein is GTPase Der.